Consider the following 94-residue polypeptide: Co-chaperonin GroES (94 aa).

Belongs to the GroES chaperonin family. Heptamer of 7 subunits arranged in a ring. Interacts with the chaperonin GroEL.

The protein resides in the cytoplasm. Functionally, together with the chaperonin GroEL, plays an essential role in assisting protein folding. The GroEL-GroES system forms a nano-cage that allows encapsulation of the non-native substrate proteins and provides a physical environment optimized to promote and accelerate protein folding. GroES binds to the apical surface of the GroEL ring, thereby capping the opening of the GroEL channel. The chain is Co-chaperonin GroES from Ehrlichia chaffeensis.